The sequence spans 412 residues: Putative F-box protein At3g22940 (412 aa).

Residues 1–38 enclose the F-box domain; sequence MPLEEILSRLPLKSTRAVRSTCKKWDSLFKNRSFISKA.

The chain is Putative F-box protein At3g22940 from Arabidopsis thaliana (Mouse-ear cress).